A 648-amino-acid chain; its full sequence is A-type voltage-gated potassium channel KCND1 (648 aa).

Over 1–183 (MAAGVATWLP…RAFENPHTST (183 aa)) the chain is Cytoplasmic. Residues 2-20 (AAGVATWLPFARAAAVGWL) form an interaction with KCNIP1, KCNIP2, and other family members region. Residues 2–20 (AAGVATWLPFARAAAVGWL) form an interaction with KCNIP2 region. Residues His-104, Cys-131, and Cys-132 each contribute to the Zn(2+) site. The tract at residues 144 to 164 (AERLAEDEEAEQAGDGPTLPA) is disordered. Residues 184-205 (AALVFYYVTGFFIAVSVIANVV) traverse the membrane as a helical segment. Topologically, residues 206 to 230 (ETIPCRSPTRRPPREQPCGDRFPLA) are extracellular. The helical transmembrane segment at 231-252 (FFCMDTACVLIFTGEYLLRLFA) threads the bilayer. Residues 253 to 263 (APSRCRFLRSV) lie on the Cytoplasmic side of the membrane. The chain crosses the membrane as a helical span at residues 264–284 (MSLIDVVAILPYYIGLFMPKN). Topologically, residues 285-287 (EDV) are extracellular. A helical; Voltage-sensor membrane pass occupies residues 288 to 308 (SGAFVTLRVFRVFRIFKFSRH). At 309–323 (SQGLRILGYTLKSCA) the chain is on the cytoplasmic side. Positions 310 to 323 (QGLRILGYTLKSCA) are S4-S5 linker. A helical membrane pass occupies residues 324-345 (SELGFLLFSLTMAIIIFATVMF). Over 346–359 (YAEKGTNKTNFTSI) the chain is Extracellular. 2 N-linked (GlcNAc...) asparagine glycosylation sites follow: Asn-352 and Asn-355. The helical intramembrane region spans 360–371 (PAAFWYTIVTMT). The Selectivity filter signature appears at 372–377 (TLGYGD). Residues 372-379 (TLGYGDMV) lie within the membrane without spanning it. The Extracellular segment spans residues 380–386 (PSTIAGK). The chain crosses the membrane as a helical span at residues 387-415 (IFGSICSLSGVLVIALPVPVIVSNFSRIY). Topologically, residues 416–648 (HQNQRADKRR…LPETVKISSL (233 aa)) are cytoplasmic. At Ser-458 the chain carries Phosphoserine. Residues 474–489 (FEQQHHHLLHCLEKTT) are mediates dendritic targeting. Residues 474 to 489 (FEQQHHHLLHCLEKTT) form a required for dendritic targeting region. Position 555 is a phosphoserine (Ser-555). The interval 601 to 636 (IPTPPANTPDESQPSSPGGGGGGASSTLRNSSLGTP) is disordered.

The protein belongs to the potassium channel family. D (Shal) (TC 1.A.1.2) subfamily. Kv4.1/KCND1 sub-subfamily. In terms of assembly, component of heteromultimeric potassium channels. Identified in potassium channel complexes containing KCND1, KCND2, KCND3, KCNIP1, KCNIP2, KCNIP3, KCNIP4, DPP6 and DPP10.

It localises to the cell membrane. It catalyses the reaction K(+)(in) = K(+)(out). Functionally, A-type voltage-gated potassium channel that mediates transmembrane potassium transport in excitable membranes in the brain. Mediates A-type current I(SA) in suprachiasmatic nucleus (SCN) neurons. Exhibits a low-threshold A-type current with a hyperpolarized steady-state inactivation midpoint and the recovery process was steeply voltage-dependent, with recovery being markedly faster at more negative potentials. May regulates repetitive firing rates in the suprachiasmatic nucleus (SCN) neurons and circadian rhythms in neuronal excitability and behavior. Contributes to the regulation of the circadian rhythm of action potential firing in suprachiasmatic nucleus neurons, which regulates the circadian rhythm of locomotor activity. The regulatory subunit KCNIP1 modulates the kinetics of channel inactivation, increases the current amplitudes and accelerates recovery from inactivation, shifts activation in a depolarizing direction. The regulatory subunit DPP10 decreases the voltage sensitivity of the inactivation channel gating. The protein is A-type voltage-gated potassium channel KCND1 of Bos taurus (Bovine).